Consider the following 496-residue polypeptide: MTTTENALTPDVRNGIEFKVADLSLADYGRRDIELSEQEMPGLMSLRREYHDVQPLKGARISGSLHMTVQTAVLIETLVALGAEVRWASCNIFSTQDHAAAAVVVGPHGTPEEPRGVPVFAWKGETLEEYWWAAEQALTWPPLADGTEAPANMILDDGGDATMLVLRGAQYEKAGVVPPDDEDDSAEHRVFLNLLRARFETDKTKWTKISESIKGVTEETTTGVLRLYQFAAAGDLAFPAINVNDSVTKSKFDNKYGCRHSLIDGINRGTDVLIGGKNVLVCGYGDVGKGSVESLAGQGARVTVTEIDPINALQALMEGYNVKRVEDVIGEADIVITATGNKDIITLEHMKAMKDKAILGNIGHFDNEIQIARLEKSGAIKTNIRPQVDLWTFPDTGKSIIVLSEGRLLNLGNATGHPSFVMSNSFSNQVIAQIELWTKNDEYDNEVYRLPKHLDEKVARIHVEALGGELTKLTKEQAEYIGVDVDGPYKADHYRY.

Thr-68, Asp-157, and Glu-219 together coordinate substrate. 220-222 (TTT) lines the NAD(+) pocket. Positions 249 and 253 each coordinate substrate. Residues Asn-254, 283 to 288 (GYGDVG), Glu-306, Asn-341, 362 to 364 (IGH), and Asn-410 contribute to the NAD(+) site.

The protein belongs to the adenosylhomocysteinase family. NAD(+) serves as cofactor.

The protein resides in the cytoplasm. It catalyses the reaction S-adenosyl-L-homocysteine + H2O = L-homocysteine + adenosine. The protein operates within amino-acid biosynthesis; L-homocysteine biosynthesis; L-homocysteine from S-adenosyl-L-homocysteine: step 1/1. In terms of biological role, may play a key role in the regulation of the intracellular concentration of adenosylhomocysteine. The sequence is that of Adenosylhomocysteinase from Mycolicibacterium paratuberculosis (strain ATCC BAA-968 / K-10) (Mycobacterium paratuberculosis).